A 220-amino-acid chain; its full sequence is dITP/XTP pyrophosphatase (220 aa).

13-18 lines the substrate pocket; that stretch reads SHNAGK. 2 residues coordinate Mg(2+): Asp-45 and Asp-74. Asp-74 acts as the Proton acceptor in catalysis. Residues Ser-75, 163-166, Lys-186, and 199-200 each bind substrate; these read FGYD and HR.

This sequence belongs to the HAM1 NTPase family. Homodimer. Requires Mg(2+) as cofactor.

The enzyme catalyses XTP + H2O = XMP + diphosphate + H(+). It carries out the reaction dITP + H2O = dIMP + diphosphate + H(+). It catalyses the reaction ITP + H2O = IMP + diphosphate + H(+). Functionally, pyrophosphatase that catalyzes the hydrolysis of nucleoside triphosphates to their monophosphate derivatives, with a high preference for the non-canonical purine nucleotides XTP (xanthosine triphosphate), dITP (deoxyinosine triphosphate) and ITP. Seems to function as a house-cleaning enzyme that removes non-canonical purine nucleotides from the nucleotide pool, thus preventing their incorporation into DNA/RNA and avoiding chromosomal lesions. The polypeptide is dITP/XTP pyrophosphatase (Mesorhizobium japonicum (strain LMG 29417 / CECT 9101 / MAFF 303099) (Mesorhizobium loti (strain MAFF 303099))).